The sequence spans 109 residues: uncharacterized protein (109 aa).

Positions M1 to S23 are cleaved as a signal peptide. Residue N27 is glycosylated (N-linked (GlcNAc...) asparagine). Residues Y45–N109 are disordered. Residues P54–Q72 show a composition bias toward low complexity. The span at K94–Q103 shows a compositional bias: basic and acidic residues.

The protein resides in the secreted. This is an uncharacterized protein from Dictyostelium discoideum (Social amoeba).